We begin with the raw amino-acid sequence, 624 residues long: APC membrane recruitment protein 2 (624 aa).

2 disordered regions span residues 1-308 (MDSH…PPSE) and 342-596 (EDVG…IPVS). Over residues 74–91 (SGKKEDAGGGEAQGKDAP) the composition is skewed to basic and acidic residues. Residues 101–111 (SASSSVAKSHS) are compositionally biased toward low complexity. Composition is skewed to basic and acidic residues over residues 120 to 132 (GRPE…ENAE) and 247 to 258 (RRLEELCGERPD). Composition is skewed to low complexity over residues 272-282 (ITGDIPITTIP) and 295-307 (AAAP…DPPS). The span at 406 to 416 (TGGGGGGGGGT) shows a compositional bias: gly residues. Basic and acidic residues predominate over residues 450 to 464 (NNKEEQKGREKEQHE). The segment covering 535 to 549 (PITTTCSLKTPSSTV) has biased composition (polar residues).

The protein belongs to the Amer family.

The protein localises to the cell membrane. Functionally, negative regulator of the canonical Wnt signaling pathway involved in neuroectodermal patterning. Acts by specifically binding phosphatidylinositol 4,5-bisphosphate (PtdIns(4,5)P2), translocating to the cell membrane and interacting with key regulators of the canonical Wnt signaling pathway, such as components of the beta-catenin destruction complex. The polypeptide is APC membrane recruitment protein 2 (AMER2) (Gallus gallus (Chicken)).